The chain runs to 255 residues: Borealin-2 (255 aa).

Disordered stretches follow at residues 1–24 (MAPRRTRKVSQDSDGQADDQHSFE) and 107–156 (IQKP…STGS). The span at 124–135 (AGQQRSSSQSKT) shows a compositional bias: polar residues.

The protein belongs to the borealin family. Component of the CPC complex.

The protein localises to the nucleus. It is found in the chromosome. Its subcellular location is the centromere. In terms of biological role, component of the chromosomal passenger complex (CPC), a complex that acts as a key regulator of mitosis. The CPC complex has essential functions at the centromere in ensuring correct chromosome alignment and segregation and is required for chromatin-induced microtubule stabilization and spindle assembly. This chain is Borealin-2 (cdca9), found in Danio rerio (Zebrafish).